The sequence spans 1036 residues: Ubiquitin carboxyl-terminal hydrolase 48 (1036 aa).

Positions 89–421 (VGLTNLGASC…NAYMLVYRLQ (333 aa)) constitute a USP domain. The Nucleophile role is filled by Cys98. The active-site Proton acceptor is His353. 3 DUSP domains span residues 460 to 554 (QSVD…KALC), 569 to 692 (NQLN…YKEC), and 712 to 825 (MIAK…RIEV). The segment at 611 to 644 (DEQDGEAEQSNGKINGSPFSKDESKEEKKEEEEE) is disordered. Residues 618-628 (EQSNGKINGSP) are compositionally biased toward polar residues. The segment at 881 to 924 (APELNVSSSETEEDKEEAKPDGEKDPDFNQSNGGTKRQKTSQQG) is disordered. Ser887, Ser888, and Ser889 each carry phosphoserine. The segment covering 896 to 907 (EEAKPDGEKDPD) has biased composition (basic and acidic residues). The segment covering 908–924 (FNQSNGGTKRQKTSQQG) has biased composition (polar residues). The Ubiquitin-like domain occupies 930 to 1010 (KQVIRRSTRH…ILLKADEPIA (81 aa)). Residue Lys957 is modified to N6-acetyllysine.

This sequence belongs to the peptidase C19 family. As to quaternary structure, interacts with TRAF2 and RELA. Interacts with GPS1. As to expression, present in the brain, in particular in the postsynaptic density and the dendritic lipid raft fractions (at protein level).

It is found in the cytoplasm. The protein localises to the nucleus. The protein resides in the cell projection. It localises to the cilium. It catalyses the reaction Thiol-dependent hydrolysis of ester, thioester, amide, peptide and isopeptide bonds formed by the C-terminal Gly of ubiquitin (a 76-residue protein attached to proteins as an intracellular targeting signal).. Its function is as follows. Deubiquitinase that recognizes and hydrolyzes the peptide bond at the C-terminal Gly of ubiquitin. Involved in the processing of polyubiquitin precursors as well as that of ubiquitinated proteins. Plays a role in the regulation of NF-kappa-B activation by TNF receptor superfamily via its interactions with RELA and TRAF2. May also play a regulatory role at postsynaptic sites. Plays an important role in cell cycle progression by deubiquitinating Aurora B/AURKB and thereby extending its stability. In the context of H. pylori infection, stabilizes nuclear RELA through deubiquitination, thereby promoting the transcriptional activity of RELA to prolong TNFAIP3 de novo synthesis. Consequently, TNFAIP3 suppresses caspase activity and apoptotic cell death. Also functions in the modulation of the ciliary and synaptic transport as well as cytoskeleton organization, which are key for photoreceptor function and homeostasis. To achieve this, stabilizes the levels of the retinal degeneration-associated proteins ARL3 and UNC119 using distinct mechanisms. Plays a positive role in pyroptosis by stabilizing gasdermin E/GSDME through removal of its 'Lys-48'-linked ubiquitination. The sequence is that of Ubiquitin carboxyl-terminal hydrolase 48 (Usp48) from Rattus norvegicus (Rat).